The following is a 301-amino-acid chain: Alpha-ketoglutarate-dependent sulfate ester dioxygenase (301 aa).

His81 contacts substrate. Positions 108 and 110 each coordinate Fe cation. Val111 provides a ligand contact to substrate. Thr135 contributes to the 2-oxoglutarate binding site. Fe cation is bound at residue His264. Positions 275 and 279 each coordinate 2-oxoglutarate.

It belongs to the TfdA dioxygenase family. In terms of assembly, homotetramer. The cofactor is Fe(2+).

The enzyme catalyses a primary linear alkyl sulfate ester + 2-oxoglutarate + O2 = an aldehyde + sulfate + succinate + CO2 + H(+). The catalysed reaction is 2-ethylhexyl sulfate + 2-oxoglutarate + O2 = 2-ethylhexanal + sulfate + succinate + CO2 + H(+). It carries out the reaction decyl sulfate + 2-oxoglutarate + O2 = decanal + sulfate + succinate + CO2 + H(+). It catalyses the reaction hexyl sulfate + 2-oxoglutarate + O2 = hexanal + sulfate + succinate + CO2 + H(+). The enzyme catalyses nonyl sufate + 2-oxoglutarate + O2 = nonanal + sulfate + succinate + CO2 + H(+). Strongly stimulated by ascorbate. Catalyzes the oxygenolytic cleavage of 2-ethylhexyl sulfate (2-EHS) in the presence of alpha-ketoglutarate to yield 2-ethyl-hexanal and succinate, the decarboxylated form of alpha-ketoglutarate. It can accept a wide range of alpha-keto acids including 2-oxo-valerate, 2-oxo-adipate, 2-oxo-octanoate, 3-methyl-2-oxo-butyrate, oxaloacetate-alpha-ketoadipate, and alpha-ketooctanoate. It can catalyze the cleavage of medium-chain alkyl sulfate esters such as butylsulfate, pentylsulfate, hexylsulfate, heptylsulfate, octylsulfate, nonylsulfate, decylsulfate and sodium dodecyl sulfate (SDS). The protein is Alpha-ketoglutarate-dependent sulfate ester dioxygenase of Pseudomonas putida (Arthrobacter siderocapsulatus).